Reading from the N-terminus, the 67-residue chain is Probable Sec-independent protein translocase protein TatE (67 aa).

The helical transmembrane segment at 4–21 threads the bilayer; the sequence is ISITKLLVIAALVVLLFG.

The protein belongs to the TatA/E family. TatE subfamily.

The protein resides in the cell inner membrane. Functionally, part of the twin-arginine translocation (Tat) system that transports large folded proteins containing a characteristic twin-arginine motif in their signal peptide across membranes. TatE shares overlapping functions with TatA. This is Probable Sec-independent protein translocase protein TatE from Citrobacter rodentium (strain ICC168) (Citrobacter freundii biotype 4280).